Consider the following 335-residue polypeptide: Methionine import ATP-binding protein MetN 1 (335 aa).

In terms of domain architecture, ABC transporter spans 2 to 242 (IEFHNVHKTY…PQHPTTRRFV (241 aa)). Residue 38–45 (GHSGAGKS) coordinates ATP.

This sequence belongs to the ABC transporter superfamily. Methionine importer (TC 3.A.1.24) family. As to quaternary structure, the complex is composed of two ATP-binding proteins (MetN), two transmembrane proteins (MetI) and a solute-binding protein (MetQ).

Its subcellular location is the cell inner membrane. It carries out the reaction L-methionine(out) + ATP + H2O = L-methionine(in) + ADP + phosphate + H(+). It catalyses the reaction D-methionine(out) + ATP + H2O = D-methionine(in) + ADP + phosphate + H(+). Its function is as follows. Part of the ABC transporter complex MetNIQ involved in methionine import. Responsible for energy coupling to the transport system. The polypeptide is Methionine import ATP-binding protein MetN 1 (Pseudomonas savastanoi pv. phaseolicola (strain 1448A / Race 6) (Pseudomonas syringae pv. phaseolicola (strain 1448A / Race 6))).